The chain runs to 182 residues: Dirigent protein 1 (182 aa).

The signal sequence occupies residues 1 to 24 (MAKRFLLLLPLLSSILLLAVSVTA). A glycan (N-linked (GlcNAc...) asparagine) is linked at Asn125.

It belongs to the plant dirigent protein family. As to quaternary structure, homodimer.

The protein resides in the secreted. The protein localises to the extracellular space. It localises to the apoplast. Functionally, dirigent proteins impart stereoselectivity on the phenoxy radical-coupling reaction, yielding optically active lignans from two molecules of coniferyl alcohol in the biosynthesis of lignans, flavonolignans, and alkaloids and thus plays a central role in plant secondary metabolism. This Arabidopsis thaliana (Mouse-ear cress) protein is Dirigent protein 1 (DIR1).